We begin with the raw amino-acid sequence, 254 residues long: Ribonuclease HII (254 aa).

The 185-residue stretch at 70–254 folds into the RNase H type-2 domain; it reads RYICGIDEVG…ASFIKNLTSC (185 aa). Residues D76, E77, and D168 each contribute to the a divalent metal cation site.

The protein belongs to the RNase HII family. It depends on Mn(2+) as a cofactor. Mg(2+) is required as a cofactor.

Its subcellular location is the cytoplasm. The catalysed reaction is Endonucleolytic cleavage to 5'-phosphomonoester.. In terms of biological role, endonuclease that specifically degrades the RNA of RNA-DNA hybrids. The protein is Ribonuclease HII of Lachnoclostridium phytofermentans (strain ATCC 700394 / DSM 18823 / ISDg) (Clostridium phytofermentans).